Reading from the N-terminus, the 331-residue chain is 2-hydroxyacid dehydrogenase homolog (331 aa).

NAD(+)-binding positions include 154–155 (KI), 232–234 (TSR), and aspartate 258. The active site involves arginine 234. Glutamate 263 is an active-site residue. The active-site Proton donor is the histidine 295. Residue 295–298 (HQAF) coordinates NAD(+).

The protein belongs to the D-isomer specific 2-hydroxyacid dehydrogenase family.

This Haemophilus influenzae (strain ATCC 51907 / DSM 11121 / KW20 / Rd) protein is 2-hydroxyacid dehydrogenase homolog (ddh).